We begin with the raw amino-acid sequence, 457 residues long: Hydrogenobyrinate a,c-diamide synthase (457 aa).

The 187-residue stretch at 255–441 folds into the GATase cobBQ-type domain; sequence TVAIAAGRAF…LHTHPAATPG (187 aa). Cys337 functions as the Nucleophile in the catalytic mechanism.

The protein belongs to the CobB/CbiA family. Mg(2+) is required as a cofactor.

It carries out the reaction hydrogenobyrinate + 2 L-glutamine + 2 ATP + 2 H2O = hydrogenobyrinate a,c-diamide + 2 L-glutamate + 2 ADP + 2 phosphate + 2 H(+). Its pathway is cofactor biosynthesis; adenosylcobalamin biosynthesis; cob(II)yrinate a,c-diamide from precorrin-2 (aerobic route): step 9/10. Functionally, catalyzes the ATP-dependent amidation of the two carboxylate groups at positions a and c of hydrogenobyrinate, using either L-glutamine or ammonia as the nitrogen source. The protein is Hydrogenobyrinate a,c-diamide synthase of Mycobacterium bovis (strain ATCC BAA-935 / AF2122/97).